A 372-amino-acid polypeptide reads, in one-letter code: 4-hydroxy-3-methylbut-2-en-1-yl diphosphate synthase (flavodoxin) (372 aa).

[4Fe-4S] cluster-binding residues include Cys-270, Cys-273, Cys-305, and Glu-312.

The protein belongs to the IspG family. [4Fe-4S] cluster serves as cofactor.

The enzyme catalyses (2E)-4-hydroxy-3-methylbut-2-enyl diphosphate + oxidized [flavodoxin] + H2O + 2 H(+) = 2-C-methyl-D-erythritol 2,4-cyclic diphosphate + reduced [flavodoxin]. It functions in the pathway isoprenoid biosynthesis; isopentenyl diphosphate biosynthesis via DXP pathway; isopentenyl diphosphate from 1-deoxy-D-xylulose 5-phosphate: step 5/6. In terms of biological role, converts 2C-methyl-D-erythritol 2,4-cyclodiphosphate (ME-2,4cPP) into 1-hydroxy-2-methyl-2-(E)-butenyl 4-diphosphate. This chain is 4-hydroxy-3-methylbut-2-en-1-yl diphosphate synthase (flavodoxin), found in Escherichia coli (strain SMS-3-5 / SECEC).